A 214-amino-acid chain; its full sequence is ATP phosphoribosyltransferase (214 aa).

It belongs to the ATP phosphoribosyltransferase family. Short subfamily. In terms of assembly, heteromultimer composed of HisG and HisZ subunits.

It localises to the cytoplasm. It carries out the reaction 1-(5-phospho-beta-D-ribosyl)-ATP + diphosphate = 5-phospho-alpha-D-ribose 1-diphosphate + ATP. It participates in amino-acid biosynthesis; L-histidine biosynthesis; L-histidine from 5-phospho-alpha-D-ribose 1-diphosphate: step 1/9. Catalyzes the condensation of ATP and 5-phosphoribose 1-diphosphate to form N'-(5'-phosphoribosyl)-ATP (PR-ATP). Has a crucial role in the pathway because the rate of histidine biosynthesis seems to be controlled primarily by regulation of HisG enzymatic activity. This is ATP phosphoribosyltransferase from Azoarcus sp. (strain BH72).